We begin with the raw amino-acid sequence, 507 residues long: AMSH-like ubiquitin thioesterase 3 (507 aa).

Positions Gln-73–Glu-107 form a coiled coil. Disordered stretches follow at residues His-133 to Ser-162 and Pro-214 to Asp-242. 3 stretches are compositionally biased toward polar residues: residues Leu-146–Ser-162, Pro-214–Asn-224, and Pro-232–Asp-242. In terms of domain architecture, MPN spans Leu-333–Val-463. Residues His-411, His-413, Asp-424, His-426, Cys-469, His-475, and His-477 each contribute to the Zn(2+) site. A JAMM motif motif is present at residues His-411–Asp-424.

It belongs to the peptidase M67C family. In terms of assembly, interacts with PATL1 and PATL2. May also bind to HSC70-1, HSC70-3, VHA-A, BGLU23 and EPSIN1. Interacts with BRO1/ALIX. Zn(2+) is required as a cofactor.

It is found in the membrane. Its subcellular location is the cytoplasm. The protein localises to the vacuole membrane. The protein resides in the late endosome. In terms of biological role, zinc metalloprotease that cleaves 'Lys-48'- and 'Lys-63'-linked polyubiquitin chains, but is not implicated in protein degradation by the 26S proteasome, deneddylation, or desumoylation. Required for intracellular trafficking (e.g. trafficking from the Golgi to the vacuole and the vacuolar trafficking of endocytosed cargo), endocytosis and vacuole biogenesis. This Arabidopsis thaliana (Mouse-ear cress) protein is AMSH-like ubiquitin thioesterase 3 (AMSH3).